The sequence spans 276 residues: 3-methyl-2-oxobutanoate hydroxymethyltransferase (276 aa).

Residues D46 and D85 each contribute to the Mg(2+) site. 3-methyl-2-oxobutanoate-binding positions include 46–47 (DS), D85, and K115. E117 is a Mg(2+) binding site. The active-site Proton acceptor is the E184.

This sequence belongs to the PanB family. Homodecamer; pentamer of dimers. It depends on Mg(2+) as a cofactor.

Its subcellular location is the cytoplasm. The enzyme catalyses 3-methyl-2-oxobutanoate + (6R)-5,10-methylene-5,6,7,8-tetrahydrofolate + H2O = 2-dehydropantoate + (6S)-5,6,7,8-tetrahydrofolate. The protein operates within cofactor biosynthesis; (R)-pantothenate biosynthesis; (R)-pantoate from 3-methyl-2-oxobutanoate: step 1/2. Its function is as follows. Catalyzes the reversible reaction in which hydroxymethyl group from 5,10-methylenetetrahydrofolate is transferred onto alpha-ketoisovalerate to form ketopantoate. This chain is 3-methyl-2-oxobutanoate hydroxymethyltransferase, found in Heliobacterium modesticaldum (strain ATCC 51547 / Ice1).